Here is a 215-residue protein sequence, read N- to C-terminus: Cytochrome b6 (215 aa).

The chain crosses the membrane as a helical span at residues Ile32–Phe52. A heme c-binding site is contributed by Cys35. Residues His86 and His100 each coordinate heme b. A run of 3 helical transmembrane segments spans residues Ala90–Phe110, Leu116–Tyr136, and Leu186–Ile206. Residues His187 and His202 each coordinate heme b.

It belongs to the cytochrome b family. PetB subfamily. In terms of assembly, the 4 large subunits of the cytochrome b6-f complex are cytochrome b6, subunit IV (17 kDa polypeptide, PetD), cytochrome f and the Rieske protein, while the 4 small subunits are PetG, PetL, PetM and PetN. The complex functions as a dimer. Heme b is required as a cofactor. The cofactor is heme c.

Its subcellular location is the plastid. The protein localises to the chloroplast thylakoid membrane. Functionally, component of the cytochrome b6-f complex, which mediates electron transfer between photosystem II (PSII) and photosystem I (PSI), cyclic electron flow around PSI, and state transitions. This chain is Cytochrome b6, found in Helianthus annuus (Common sunflower).